Reading from the N-terminus, the 296-residue chain is Methylsterol monooxygenase erg25B (296 aa).

3 helical membrane-spanning segments follow: residues 50–70, 98–118, and 125–145; these read IMSFVMHEIVYFGRSVPWILI, FVLLSHFTVELPQIWLFHPMA, and TSVPFPSVWTMMYQIAIFFVL. Residues 140 to 276 enclose the Fatty acid hydroxylase domain; that stretch reads AIFFVLEDTW…FRWWDYLLDT (137 aa). The Histidine box-1 signature appears at 154–158; it reads HRALH. The Histidine box-2 signature appears at 167–171; sequence HKIHH. Residues 201–221 traverse the membrane as a helical segment; the sequence is ILWCALTGDLHIFTMYVWIVL. The Histidine box-3 motif lies at 251–257; that stretch reads HHDLHHE.

This sequence belongs to the sterol desaturase family. It depends on Fe cation as a cofactor.

The protein localises to the endoplasmic reticulum membrane. Its pathway is steroid metabolism; ergosterol biosynthesis. Functionally, sterol-C4-methyl oxidase; part of the third module of ergosterol biosynthesis pathway that includes the late steps of the pathway. Erg25B is a catalytic component of the C-4 demethylation complex that catalyzes the conversion of 4,4-dimethylfecosterol into fecosterol via 4-methylfecosterol. The third module or late pathway involves the ergosterol synthesis itself through consecutive reactions that mainly occur in the endoplasmic reticulum (ER) membrane. Firstly, the squalene synthase erg9 catalyzes the condensation of 2 farnesyl pyrophosphate moieties to form squalene, which is the precursor of all steroids. Squalene synthase is crucial for balancing the incorporation of farnesyl diphosphate (FPP) into sterol and nonsterol isoprene synthesis. Secondly, squalene is converted into lanosterol by the consecutive action of the squalene epoxidase erg1 and the lanosterol synthase erg7. Then, the delta(24)-sterol C-methyltransferase erg6 methylates lanosterol at C-24 to produce eburicol. Eburicol is the substrate of the sterol 14-alpha demethylase encoded by cyp51A and cyp51B, to yield 4,4,24-trimethyl ergosta-8,14,24(28)-trienol. The C-14 reductase erg24 then reduces the C14=C15 double bond which leads to 4,4-dimethylfecosterol. A sequence of further demethylations at C-4, involving the C-4 demethylation complex containing the C-4 methylsterol oxidases erg25A or erg25B, the sterol-4-alpha-carboxylate 3-dehydrogenase erg26 and the 3-keto-steroid reductase erg27, leads to the production of fecosterol via 4-methylfecosterol. The C-8 sterol isomerase erg2 then catalyzes the reaction which results in unsaturation at C-7 in the B ring of sterols and thus converts fecosterol to episterol. The sterol-C5-desaturase erg3B then catalyzes the introduction of a C-5 double bond in the B ring to produce 5-dehydroepisterol. The 2 other sterol-C5-desaturases, erg3A and erg3C, seem to be less important in ergosterol biosynthesis. The C-22 sterol desaturase erg5 further converts 5-dehydroepisterol into ergosta-5,7,22,24(28)-tetraen-3beta-ol by forming the C-22(23) double bond in the sterol side chain. Finally, ergosta-5,7,22,24(28)-tetraen-3beta-ol is substrate of the C-24(28) sterol reductases erg4A and erg4B to produce ergosterol. Possible alternative sterol biosynthetic pathways might exist from fecosterol to ergosterol, depending on the activities of the erg3 isoforms. The protein is Methylsterol monooxygenase erg25B of Aspergillus fumigatus (strain ATCC MYA-4609 / CBS 101355 / FGSC A1100 / Af293) (Neosartorya fumigata).